The sequence spans 491 residues: MNDLTFITPEINWTVLGMPAFLMIWAMLVLIVDMFTSDRRVLLTLSLIGLGVTAALGALDYGSTISGFSDMLVFDKFGVLVNWILLAGTALTLLIAFDYMPRQNLSQGEFYPLVLFATSGMLFLVQSTDLVTIFIGVETLSIALYVLTGFAVPQFKSGEAAIKYLLLGGFAAGFLVYGIALIYGMTGKTNLAQIANELSTWQSTGKALDDPILLAGVGFVLIALGFKVSMFPFHAWTPDVYEGAPTPVTAYMSVATKGAAFAAMLRFLNVAFPALKPEWQLLFGLFAAATMAYGNIVAVAQTNLKRMLAYSSIAHAGYMLLGVLAASEKGISAFTVYLLAYTLTNLGAFAVLIALENRGMPVFELSDLRGLGKRSPLLALAMTVFMFSLAGVPPTAGFASKFGIFRAAWDANLDYLAIIGVVTSVISAFFYLRVIVTMWMRDTEATEPQPTYATASLSLGVIVAVIGIIAVGILPNIFTDLAKALVLTVAP.

14 consecutive transmembrane segments (helical) span residues 15-35, 41-61, 77-97, 105-125, 130-150, 165-185, 211-231, 247-269, 279-299, 307-327, 333-353, 378-398, 416-436, and 459-479; these read VLGMPAFLMIWAMLVLIVDMF, VLLTLSLIGLGVTAALGALDY, FGVLVNWILLAGTALTLLIAF, LSQGEFYPLVLFATSGMLFLV, LVTIFIGVETLSIALYVLTGF, LLLGGFAAGFLVYGIALIYGM, PILLAGVGFVLIALGFKVSMF, PVTAYMSVATKGAAFAAMLRFLN, WQLLFGLFAAATMAYGNIVAV, MLAYSSIAHAGYMLLGVLAAS, AFTVYLLAYTLTNLGAFAVLI, LALAMTVFMFSLAGVPPTAGF, LAIIGVVTSVISAFFYLRVIV, and LGVIVAVIGIIAVGILPNIFT.

It belongs to the complex I subunit 2 family. NDH-1 is composed of 14 different subunits. Subunits NuoA, H, J, K, L, M, N constitute the membrane sector of the complex.

Its subcellular location is the cell membrane. It catalyses the reaction a quinone + NADH + 5 H(+)(in) = a quinol + NAD(+) + 4 H(+)(out). Functionally, NDH-1 shuttles electrons from NADH, via FMN and iron-sulfur (Fe-S) centers, to quinones in the respiratory chain. The immediate electron acceptor for the enzyme in this species is believed to be ubiquinone. Couples the redox reaction to proton translocation (for every two electrons transferred, four hydrogen ions are translocated across the cytoplasmic membrane), and thus conserves the redox energy in a proton gradient. This Herpetosiphon aurantiacus (strain ATCC 23779 / DSM 785 / 114-95) protein is NADH-quinone oxidoreductase subunit N 1.